The chain runs to 26 residues: Dermaseptin-J1 (26 aa).

Position 26 is a valine amide (valine 26).

In terms of tissue distribution, expressed by the skin glands.

Its subcellular location is the secreted. Has antimicrobial activity. This Phasmahyla jandaia (Jandaia leaf frog) protein is Dermaseptin-J1.